The primary structure comprises 232 residues: RNA chaperone ProQ (232 aa).

Positions 105–182 (EAKARVQAQR…REEQHTPVSD (78 aa)) are disordered. 2 stretches are compositionally biased toward basic and acidic residues: residues 117–138 (QQAKKREAAAAAGEKEDAPPRE) and 147–177 (RRKEGAERKPRAQKPVEKAPKTVKAPREEQH).

The protein belongs to the ProQ family.

It is found in the cytoplasm. In terms of biological role, RNA chaperone with significant RNA binding, RNA strand exchange and RNA duplexing activities. May regulate ProP activity through an RNA-based, post-transcriptional mechanism. This chain is RNA chaperone ProQ, found in Escherichia coli O139:H28 (strain E24377A / ETEC).